A 269-amino-acid polypeptide reads, in one-letter code: MHVFGLIGYPLNYTLSPQIHNYVFKRLRIDAAYVPLRVASKRLLHFIEFSRDALSGFNVTIPHKVAVAKLIDELNDDADTIKSVNTVVNSNQKLIGYNTDYVAVEESLIERGYKGEEALLIGAGGAARAVVLALSKTGCRAIKVLNRSRERAVELCGLANGLGLDCSVVDIGGNYGKPHVIINATPLSSEEYWLLNLGELGTMLLLDMAYKPNTETDLIKRARELGIQVIDGVEILVRQALAADKLWLGDFNEPSASEVIKYIKGINPS.

Residues 14-16 and Thr60 contribute to the shikimate site; that span reads TLS. Catalysis depends on Lys64, which acts as the Proton acceptor. Asp76 serves as a coordination point for NADP(+). Shikimate is bound by residues Asn85 and Asp100. NADP(+) is bound by residues 122–126 and Met208; that span reads GAGGA. Residue Tyr210 participates in shikimate binding. Gly232 contributes to the NADP(+) binding site.

Belongs to the shikimate dehydrogenase family. As to quaternary structure, homodimer.

The catalysed reaction is shikimate + NADP(+) = 3-dehydroshikimate + NADPH + H(+). The protein operates within metabolic intermediate biosynthesis; chorismate biosynthesis; chorismate from D-erythrose 4-phosphate and phosphoenolpyruvate: step 4/7. Functionally, involved in the biosynthesis of the chorismate, which leads to the biosynthesis of aromatic amino acids. Catalyzes the reversible NADPH linked reduction of 3-dehydroshikimate (DHSA) to yield shikimate (SA). The sequence is that of Shikimate dehydrogenase (NADP(+)) from Caldivirga maquilingensis (strain ATCC 700844 / DSM 13496 / JCM 10307 / IC-167).